Reading from the N-terminus, the 279-residue chain is Lysozyme-like protein 2 (279 aa).

The first 19 residues, 1–19 (MIKLLVSFTILFVLSSARP), serve as a signal peptide directing secretion. The Ch-type lysozyme domain maps to 47–265 (MGNAVDFSFP…AAAPKTEVNM (219 aa)).

Belongs to the glycosyl hydrolase 25 family. As to expression, expressed in intestine.

In terms of biological role, involved in resistance to Gram-positive bacteria P.aeruginosa or B.thuringiensis infection. The chain is Lysozyme-like protein 2 from Caenorhabditis elegans.